Consider the following 357-residue polypeptide: Heat-inducible transcription repressor HrcA (357 aa).

The protein belongs to the HrcA family.

Negative regulator of class I heat shock genes (grpE-dnaK-dnaJ and groELS operons). Prevents heat-shock induction of these operons. The sequence is that of Heat-inducible transcription repressor HrcA from Chlorobium luteolum (strain DSM 273 / BCRC 81028 / 2530) (Pelodictyon luteolum).